The sequence spans 206 residues: Somatotropin (206 aa).

The signal sequence occupies residues 1–22 (MAGLHFFPALLALLMASLQTHQ). 2 cysteine pairs are disulfide-bonded: cysteine 75-cysteine 179 and cysteine 196-cysteine 204.

Belongs to the somatotropin/prolactin family.

Its subcellular location is the secreted. In terms of biological role, growth hormone plays an important role in growth control and is involved in the regulation of several anabolic processes. Implicated as an osmoregulatory substance important for seawater adaptation. The sequence is that of Somatotropin (gh) from Protopterus annectens (African lungfish).